The chain runs to 880 residues: Nonsense-mediated mRNA decay factor SMG7-like (880 aa).

TPR repeat units lie at residues 149-183 (QEQY…NPHN) and 184-217 (QLAV…GASN). Positions 669 to 711 (RLGLSKPNGLGPIDETGPVSAFDSLSINSSTEHPASSYSPPTP) are disordered. Residues 691–701 (DSLSINSSTEH) are compositionally biased toward polar residues.

In terms of biological role, may play a role in growth and development. The polypeptide is Nonsense-mediated mRNA decay factor SMG7-like (Arabidopsis thaliana (Mouse-ear cress)).